Consider the following 417-residue polypeptide: MDYIKEWILPQDPEVAEAIAQEEQRQRYKIELIASENFVSRAVMAAQGSVLTNKYAEGYPGKRYYGGCEYVDIVEDLARERVKKLFGAEHANVQPHSGAQANTAVYFAMLKPGDTVLGMNLSHGGHLTHGSPVNISGMYYNFVAYGVDQVTERIDYDVVRQLALEHRPKLIVAGASAYPRQIDFARLREIADEADSYFMVDMAHIAGLVAAGLHQNPVPYAHFVTTTTHKTLRGPRGGLILCQEEFAKAIDKAIFPGIQGGPLMHVIAAKAVAFGEALKPEFVEYQKRIVENAKVLSETLAEKGFRIVSGGTDNHLMLVDVRSKGLTGKEAEYILDEVGITVNKNTIPYDPASPMVTSGIRIGTPAVTSRGMDTLAMKKIAAAIDIALSEPNEAGAAKARDMVAALCAEYPLYPNLD.

Residues L121 and 125 to 127 each bind (6S)-5,6,7,8-tetrahydrofolate; that span reads GHL. K230 bears the N6-(pyridoxal phosphate)lysine mark. E245 contacts (6S)-5,6,7,8-tetrahydrofolate.

Belongs to the SHMT family. As to quaternary structure, homodimer. Pyridoxal 5'-phosphate serves as cofactor.

The protein localises to the cytoplasm. It catalyses the reaction (6R)-5,10-methylene-5,6,7,8-tetrahydrofolate + glycine + H2O = (6S)-5,6,7,8-tetrahydrofolate + L-serine. It participates in one-carbon metabolism; tetrahydrofolate interconversion. The protein operates within amino-acid biosynthesis; glycine biosynthesis; glycine from L-serine: step 1/1. Functionally, catalyzes the reversible interconversion of serine and glycine with tetrahydrofolate (THF) serving as the one-carbon carrier. This reaction serves as the major source of one-carbon groups required for the biosynthesis of purines, thymidylate, methionine, and other important biomolecules. Also exhibits THF-independent aldolase activity toward beta-hydroxyamino acids, producing glycine and aldehydes, via a retro-aldol mechanism. This is Serine hydroxymethyltransferase from Desulfitobacterium hafniense (strain DSM 10664 / DCB-2).